Reading from the N-terminus, the 20-residue chain is Agglutinin beta-2 chain isoform 1 (20 aa).

Over residues 1–10 (TQSTGTSQTI) the composition is skewed to polar residues. The interval 1–20 (TQSTGTSQTIAVGLWGGPDN) is disordered.

Belongs to the jacalin lectin family. Tetramer of four alpha chains associated with two or four beta chains.

Its function is as follows. Alpha-methyl-D-mannoside and D-mannose specific lectin. Binds IgA. In Morus nigra (Black mulberry), this protein is Agglutinin beta-2 chain isoform 1.